Reading from the N-terminus, the 416-residue chain is Creatine kinase U-type, mitochondrial (416 aa).

Residues 1–39 (MAGPFSRLLSARPGLRLLALAGAGSLAAGFLLRSEPVRA) constitute a mitochondrion transit peptide. The interval 40–64 (ASERRRLYPPSAEYPDLRKHNNCMA) is cardiolipin-binding. Residues 45–131 (RLYPPSAEYP…FDPVIQERHN (87 aa)) form the Phosphagen kinase N-terminal domain. Phosphoserine is present on serine 151. The 243-residue stretch at 158-400 (YVLSSRVRTG…NFLIDCERRL (243 aa)) folds into the Phosphagen kinase C-terminal domain. Position 161–165 (161–165 (SSRVR)) interacts with ATP. Residue serine 196 is modified to Phosphoserine. The residue at position 213 (threonine 213) is a Phosphothreonine. Histidine 224 serves as a coordination point for ATP. Serine 232 is subject to Phosphoserine. Residues arginine 269, arginine 325, and 353-358 (RGTGGV) each bind ATP. Position 355 is a phosphothreonine (threonine 355). Serine 365 is subject to Phosphoserine. Aspartate 368 is an ATP binding site.

It belongs to the ATP:guanido phosphotransferase family. Exists as an octamer composed of four MTCK homodimers.

It localises to the mitochondrion inner membrane. The catalysed reaction is creatine + ATP = N-phosphocreatine + ADP + H(+). In terms of biological role, reversibly catalyzes the transfer of phosphate between ATP and various phosphogens (e.g. creatine phosphate). Creatine kinase isoenzymes play a central role in energy transduction in tissues with large, fluctuating energy demands, such as skeletal muscle, heart, brain and spermatozoa. This Bos taurus (Bovine) protein is Creatine kinase U-type, mitochondrial (CKMT1).